Reading from the N-terminus, the 260-residue chain is Proteasome subunit alpha (260 aa).

The segment covering Ala237 to Ser248 has biased composition (low complexity). Positions Ala237 to Pro260 are disordered. The span at Val251–Pro260 shows a compositional bias: basic and acidic residues.

It belongs to the peptidase T1A family. As to quaternary structure, the 20S proteasome core is composed of 14 alpha and 14 beta subunits that assemble into four stacked heptameric rings, resulting in a barrel-shaped structure. The two inner rings, each composed of seven catalytic beta subunits, are sandwiched by two outer rings, each composed of seven alpha subunits. The catalytic chamber with the active sites is on the inside of the barrel. Has a gated structure, the ends of the cylinder being occluded by the N-termini of the alpha-subunits. Is capped by the proteasome-associated ATPase, ARC.

It is found in the cytoplasm. It participates in protein degradation; proteasomal Pup-dependent pathway. The formation of the proteasomal ATPase ARC-20S proteasome complex, likely via the docking of the C-termini of ARC into the intersubunit pockets in the alpha-rings, may trigger opening of the gate for substrate entry. Interconversion between the open-gate and close-gate conformations leads to a dynamic regulation of the 20S proteasome proteolysis activity. Component of the proteasome core, a large protease complex with broad specificity involved in protein degradation. The polypeptide is Proteasome subunit alpha (Salinispora tropica (strain ATCC BAA-916 / DSM 44818 / JCM 13857 / NBRC 105044 / CNB-440)).